We begin with the raw amino-acid sequence, 932 residues long: von Willebrand factor A domain-containing protein DDB_G0292028 (932 aa).

Positions 1–49 (MNFIKKVIGGGSSKSKTDIKIEDEQHEQQHEQQHEKQQIPDKISTSKVN) are disordered. Over residues 15–39 (SKTDIKIEDEQHEQQHEQQHEKQQI) the composition is skewed to basic and acidic residues. In terms of domain architecture, VIT spans 95–222 (LTSPGLNTKV…DVTVNITITS (128 aa)). The VWFA domain occupies 342–521 (EFIFVLDCSG…IAMQPTLSNI (180 aa)). 2 disordered regions span residues 661 to 752 (QQIN…SQAQ) and 800 to 834 (TSQI…STSS). Over residues 677–686 (TRVQGSSSVF) the composition is skewed to polar residues. Low complexity predominate over residues 815-834 (SSSPTIQKSSSLPSRPSTSS).

The chain is von Willebrand factor A domain-containing protein DDB_G0292028 from Dictyostelium discoideum (Social amoeba).